A 623-amino-acid polypeptide reads, in one-letter code: MITQAMIENFPPSPGVYLMKSADDTVIYVGKARNLKKRVRSYAGDTRDSRIHIRFMVQLVHSVDYLVTDTEKEALILENTLIKQHRPKYNINLRDDKTYFSLRMDMKEQFPRLSIVRKIPSDGARYFGPYASATAAKEVLKQLYKMFPLRHYPLATCMARKRPCLYHQIKQCSAPCCGLISAAEYAALAHGAALFLEGKNTEVARLYRSKMNLAAEQMRYEDAARYRDLLRAIEVTVERQKMVAQSDDSDVFGLHREADRMQIALLHIRGGTLTGGRSFLFDWELETEEGLASFLNEYYDLDAPIPPQVLIPVPIAEPAALEELLSEKAGKKVTIAVPQRGPKLEMVKLAGKNAETAAQERLARESSSATLLTELAEKLNLPHPPRRIECYDISNIQGEMAVGSRVVFIDGRADKSLYRRYRIKGVLQSDDFAMMREVLSRRFKAESSEEKPDLIVVDGGLGQLGVLNAVLDELEVTGVEAAGLAKSRVARDMESEEIERSDERVFRPGRKNAIALRQSSAPLLLLVRIRDEAHRFAVTYHKDVRSKVLTGSELDGVAGIGEKRKKALLKHFGSLKRVKEATLEELKGAPGMTESAAKALVERLHGSPLPNPPPPGEGAMDRK.

Residues 12–91 enclose the GIY-YIG domain; the sequence is PSPGVYLMKS…IKQHRPKYNI (80 aa). The UVR domain occupies 201–236; sequence TEVARLYRSKMNLAAEQMRYEDAARYRDLLRAIEVT. The interval 603–623 is disordered; it reads RLHGSPLPNPPPPGEGAMDRK.

This sequence belongs to the UvrC family. Interacts with UvrB in an incision complex.

The protein resides in the cytoplasm. In terms of biological role, the UvrABC repair system catalyzes the recognition and processing of DNA lesions. UvrC both incises the 5' and 3' sides of the lesion. The N-terminal half is responsible for the 3' incision and the C-terminal half is responsible for the 5' incision. The chain is UvrABC system protein C from Citrifermentans bemidjiense (strain ATCC BAA-1014 / DSM 16622 / JCM 12645 / Bem) (Geobacter bemidjiensis).